A 987-amino-acid chain; its full sequence is Rho GTPase-activating protein 6 (987 aa).

Residues 1–21 are compositionally biased toward polar residues; it reads MSAQSLLHSVFSCSSPASGGT. 3 disordered regions span residues 1-60, 76-117, and 144-170; these read MSAQ…RGST, SRLA…SGSF, and GSGS…IFSS. Position 37 is a phosphoserine (Ser37). Positions 44–57 are enriched in gly residues; the sequence is GGCGSEMGAEGGLR. Polar residues predominate over residues 100-115; sequence SSFSTPSTPQEKSPSG. The segment covering 144–159 has biased composition (low complexity); sequence GSGSASSRSPASILSS. Ser265 bears the Phosphoserine mark. The interval 324–363 is disordered; it reads KQNKELSSSNSSLSSTSETPNESTSPNTPEPAPRARRRGA. Low complexity predominate over residues 328–350; that stretch reads ELSSSNSSLSSTSETPNESTSPN. The SH3-binding signature appears at 344–354; the sequence is NESTSPNTPEP. Position 365 is a phosphoserine (Ser365). The 202-residue stretch at 403 to 604 folds into the Rho-GAP domain; sequence LSLNPIYRQV…KMIENYEALF (202 aa). The interval 641–676 is disordered; sequence DILQTEVSFSMGGRHSSTDSNKASSGDISPYDNNSP. The span at 658 to 676 shows a compositional bias: polar residues; it reads TDSNKASSGDISPYDNNSP. Residues Ser669, Ser675, Ser682, Ser713, Ser758, Ser776, Ser781, Ser790, and Ser824 each carry the phosphoserine modification. A disordered region spans residues 709–731; the sequence is GHLSSPKSKSRESSPGPRLGKEM. Disordered stretches follow at residues 825–847 and 863–953; these read TPHI…PFLS and WLQS…QDKQ. The segment covering 939-948 has biased composition (low complexity); sequence LSSAYSLSAS. Ser941 and Ser944 each carry phosphoserine.

In terms of tissue distribution, expressed in retina and lung.

Its subcellular location is the cytoplasm. GTPase activator for the Rho-type GTPases by converting them to an inactive GDP-bound state. Could regulate the interactions of signaling molecules with the actin cytoskeleton. Promotes continuous elongation of cytoplasmic processes during cell motility and simultaneous retraction of the cell body changing the cell morphology. The sequence is that of Rho GTPase-activating protein 6 (Arhgap6) from Mus musculus (Mouse).